Reading from the N-terminus, the 511-residue chain is MQHEIVIVLDFGGQYNQLIARRVRECGVYCEIWPYDTPLEKIIEKNPKGIIFTGGPSSVYEENAPVVDKKIFEIGVPILGICYGNQLIAYFLGGKVSTALFREYGKTHIKYNTNSPLFTGLPESSICWMSHTDFVEELPEGFEILASTENCAIAAFGSREKKIYGVQFHPEVVHTEFGQEIIKNFLFNICGCKGDWKTSSFIEERINEIRKIVGNQKVVCALSGGVDSSVAAVLVHKAIGKNLFCIFVDHGLLRKGEAEEVIKTFKGQFDMNVIKVDAKERFLKALCGVIDPERKRKIIGEEFIRVFEEEASKLGDVKFLVQGTIYPDVVESGVGKAATIKSHHNVGGLPEHIKFERIIEPLRELFKDEVRRVGVELGIPEKIVKRQPFPGPGLAIRIIGEVTEEKLEILREVDWIFRKEIEACGLDEEIWQYFAVLTDMRSVGVMGDERTYDYTVALRAVTSVDGMTADWARIPYDVLERVSNEIVNTVRKVNRVVYDITSKPPATIEWE.

Positions 5–195 constitute a Glutamine amidotransferase type-1 domain; the sequence is IVIVLDFGGQ…LFNICGCKGD (191 aa). The active-site Nucleophile is the Cys82. Residues His169 and Glu171 contribute to the active site. The GMPS ATP-PPase domain maps to 196 to 386; it reads WKTSSFIEER…LGIPEKIVKR (191 aa). 223-229 lines the ATP pocket; the sequence is SGGVDSS.

As to quaternary structure, homodimer.

It carries out the reaction XMP + L-glutamine + ATP + H2O = GMP + L-glutamate + AMP + diphosphate + 2 H(+). The protein operates within purine metabolism; GMP biosynthesis; GMP from XMP (L-Gln route): step 1/1. Catalyzes the synthesis of GMP from XMP. This is GMP synthase [glutamine-hydrolyzing] from Caldicellulosiruptor saccharolyticus (strain ATCC 43494 / DSM 8903 / Tp8T 6331).